The following is a 496-amino-acid chain: 2,3-bisphosphoglycerate-independent phosphoglycerate mutase (496 aa).

Residues D12 and S62 each contribute to the Mn(2+) site. Residue S62 is the Phosphoserine intermediate of the active site. Substrate contacts are provided by residues H121, 150–151 (RD), R181, R187, 252–255 (RNDR), and K317. Mn(2+) contacts are provided by D384, H388, D425, H426, and H444.

This sequence belongs to the BPG-independent phosphoglycerate mutase family. In terms of assembly, monomer. The cofactor is Mn(2+).

The enzyme catalyses (2R)-2-phosphoglycerate = (2R)-3-phosphoglycerate. The protein operates within carbohydrate degradation; glycolysis; pyruvate from D-glyceraldehyde 3-phosphate: step 3/5. In terms of biological role, catalyzes the interconversion of 2-phosphoglycerate and 3-phosphoglycerate. This Anaplasma phagocytophilum (strain HZ) protein is 2,3-bisphosphoglycerate-independent phosphoglycerate mutase.